The following is a 742-amino-acid chain: Phosphoribosylformylglycinamidine synthase subunit PurL (742 aa).

Residue His53 is part of the active site. ATP contacts are provided by Tyr56 and Lys95. A Mg(2+)-binding site is contributed by Glu97. Substrate is bound by residues 98-101 and Arg120; that span reads SHNH. His99 (proton acceptor) is an active-site residue. Position 121 (Asp121) interacts with Mg(2+). Gln244 is a substrate binding site. A Mg(2+)-binding site is contributed by Asp274. 318 to 320 contacts substrate; that stretch reads ESQ. Asp501 and Gly538 together coordinate ATP. Asn539 is a Mg(2+) binding site. Substrate is bound at residue Ser541.

Belongs to the FGAMS family. In terms of assembly, monomer. Part of the FGAM synthase complex composed of 1 PurL, 1 PurQ and 2 PurS subunits.

Its subcellular location is the cytoplasm. It catalyses the reaction N(2)-formyl-N(1)-(5-phospho-beta-D-ribosyl)glycinamide + L-glutamine + ATP + H2O = 2-formamido-N(1)-(5-O-phospho-beta-D-ribosyl)acetamidine + L-glutamate + ADP + phosphate + H(+). It functions in the pathway purine metabolism; IMP biosynthesis via de novo pathway; 5-amino-1-(5-phospho-D-ribosyl)imidazole from N(2)-formyl-N(1)-(5-phospho-D-ribosyl)glycinamide: step 1/2. In terms of biological role, part of the phosphoribosylformylglycinamidine synthase complex involved in the purines biosynthetic pathway. Catalyzes the ATP-dependent conversion of formylglycinamide ribonucleotide (FGAR) and glutamine to yield formylglycinamidine ribonucleotide (FGAM) and glutamate. The FGAM synthase complex is composed of three subunits. PurQ produces an ammonia molecule by converting glutamine to glutamate. PurL transfers the ammonia molecule to FGAR to form FGAM in an ATP-dependent manner. PurS interacts with PurQ and PurL and is thought to assist in the transfer of the ammonia molecule from PurQ to PurL. This Limosilactobacillus reuteri (strain DSM 20016) (Lactobacillus reuteri) protein is Phosphoribosylformylglycinamidine synthase subunit PurL.